The following is a 730-amino-acid chain: Ribosomal RNA large subunit methyltransferase K/L (730 aa).

A THUMP domain is found at 46-157 (TAYRLCVWSR…RGEAILSLDL (112 aa)). The tract at residues 394–418 (GERREAQPEGTEARQQVPQASEPAR) is disordered.

Belongs to the methyltransferase superfamily. RlmKL family.

It is found in the cytoplasm. The enzyme catalyses guanosine(2445) in 23S rRNA + S-adenosyl-L-methionine = N(2)-methylguanosine(2445) in 23S rRNA + S-adenosyl-L-homocysteine + H(+). The catalysed reaction is guanosine(2069) in 23S rRNA + S-adenosyl-L-methionine = N(2)-methylguanosine(2069) in 23S rRNA + S-adenosyl-L-homocysteine + H(+). Its function is as follows. Specifically methylates the guanine in position 2445 (m2G2445) and the guanine in position 2069 (m7G2069) of 23S rRNA. This Pseudomonas putida (strain ATCC 700007 / DSM 6899 / JCM 31910 / BCRC 17059 / LMG 24140 / F1) protein is Ribosomal RNA large subunit methyltransferase K/L.